A 433-amino-acid polypeptide reads, in one-letter code: Serine hydroxymethyltransferase (433 aa).

Residues L131 and 135–137 (GHL) each bind (6S)-5,6,7,8-tetrahydrofolate. Residue K240 is modified to N6-(pyridoxal phosphate)lysine.

This sequence belongs to the SHMT family. In terms of assembly, homodimer. Pyridoxal 5'-phosphate serves as cofactor.

It is found in the cytoplasm. The catalysed reaction is (6R)-5,10-methylene-5,6,7,8-tetrahydrofolate + glycine + H2O = (6S)-5,6,7,8-tetrahydrofolate + L-serine. Its pathway is one-carbon metabolism; tetrahydrofolate interconversion. The protein operates within amino-acid biosynthesis; glycine biosynthesis; glycine from L-serine: step 1/1. Catalyzes the reversible interconversion of serine and glycine with tetrahydrofolate (THF) serving as the one-carbon carrier. This reaction serves as the major source of one-carbon groups required for the biosynthesis of purines, thymidylate, methionine, and other important biomolecules. Also exhibits THF-independent aldolase activity toward beta-hydroxyamino acids, producing glycine and aldehydes, via a retro-aldol mechanism. This is Serine hydroxymethyltransferase from Bifidobacterium adolescentis (strain ATCC 15703 / DSM 20083 / NCTC 11814 / E194a).